A 197-amino-acid chain; its full sequence is Imidazoleglycerol-phosphate dehydratase (197 aa).

This sequence belongs to the imidazoleglycerol-phosphate dehydratase family.

Its subcellular location is the cytoplasm. It catalyses the reaction D-erythro-1-(imidazol-4-yl)glycerol 3-phosphate = 3-(imidazol-4-yl)-2-oxopropyl phosphate + H2O. It functions in the pathway amino-acid biosynthesis; L-histidine biosynthesis; L-histidine from 5-phospho-alpha-D-ribose 1-diphosphate: step 6/9. This chain is Imidazoleglycerol-phosphate dehydratase, found in Bradyrhizobium sp. (strain ORS 278).